Reading from the N-terminus, the 585-residue chain is tRNA-guanine(15) transglycosylase (585 aa).

The Nucleophile role is filled by D95. Residues D130 and A196 each contribute to the substrate site. Positions 279, 281, and 284 each coordinate Zn(2+). In terms of domain architecture, PUA spans 507-582 (VMRVVVNKEA…RAVKTRRGVE (76 aa)).

This sequence belongs to the archaeosine tRNA-ribosyltransferase family. Zn(2+) is required as a cofactor.

The enzyme catalyses guanosine(15) in tRNA + 7-cyano-7-deazaguanine = 7-cyano-7-carbaguanosine(15) in tRNA + guanine. It participates in tRNA modification; archaeosine-tRNA biosynthesis. Exchanges the guanine residue with 7-cyano-7-deazaguanine (preQ0) at position 15 in the dihydrouridine loop (D-loop) of archaeal tRNAs. The protein is tRNA-guanine(15) transglycosylase of Pyrococcus furiosus (strain ATCC 43587 / DSM 3638 / JCM 8422 / Vc1).